The chain runs to 61 residues: Putative antitoxin PYRAB11980 (61 aa).

This sequence belongs to the UPF0165 family.

Possibly the antitoxin component of a type II toxin-antitoxin (TA) system. In Pyrococcus abyssi (strain GE5 / Orsay), this protein is Putative antitoxin PYRAB11980.